A 125-amino-acid polypeptide reads, in one-letter code: Small ribosomal subunit protein eS8 (125 aa).

Belongs to the eukaryotic ribosomal protein eS8 family. In terms of assembly, part of the 30S ribosomal subunit.

The sequence is that of Small ribosomal subunit protein eS8 from Methanosarcina mazei (strain ATCC BAA-159 / DSM 3647 / Goe1 / Go1 / JCM 11833 / OCM 88) (Methanosarcina frisia).